Consider the following 104-residue polypeptide: Iron-sulfur cluster assembly protein CyaY (104 aa).

This sequence belongs to the frataxin family.

Its function is as follows. Involved in iron-sulfur (Fe-S) cluster assembly. May act as a regulator of Fe-S biogenesis. In Aliivibrio fischeri (strain ATCC 700601 / ES114) (Vibrio fischeri), this protein is Iron-sulfur cluster assembly protein CyaY.